We begin with the raw amino-acid sequence, 142 residues long: Ribosome-binding factor A (142 aa).

Positions 119 to 142 (EAKQKQHGVETDAEQGETKDEGDK) are disordered.

This sequence belongs to the RbfA family. In terms of assembly, monomer. Binds 30S ribosomal subunits, but not 50S ribosomal subunits or 70S ribosomes.

It is found in the cytoplasm. Its function is as follows. One of several proteins that assist in the late maturation steps of the functional core of the 30S ribosomal subunit. Associates with free 30S ribosomal subunits (but not with 30S subunits that are part of 70S ribosomes or polysomes). Required for efficient processing of 16S rRNA. May interact with the 5'-terminal helix region of 16S rRNA. The protein is Ribosome-binding factor A of Shewanella halifaxensis (strain HAW-EB4).